Here is a 342-residue protein sequence, read N- to C-terminus: Protein RecA (342 aa).

65-72 serves as a coordination point for ATP; that stretch reads GPESSGKT.

It belongs to the RecA family.

It is found in the cytoplasm. Can catalyze the hydrolysis of ATP in the presence of single-stranded DNA, the ATP-dependent uptake of single-stranded DNA by duplex DNA, and the ATP-dependent hybridization of homologous single-stranded DNAs. It interacts with LexA causing its activation and leading to its autocatalytic cleavage. This is Protein RecA from Caldanaerobacter subterraneus subsp. tengcongensis (strain DSM 15242 / JCM 11007 / NBRC 100824 / MB4) (Thermoanaerobacter tengcongensis).